The chain runs to 110 residues: Nucleoid-associated protein SYO3AOP1_1366 (110 aa).

It belongs to the YbaB/EbfC family. As to quaternary structure, homodimer.

Its subcellular location is the cytoplasm. It is found in the nucleoid. Binds to DNA and alters its conformation. May be involved in regulation of gene expression, nucleoid organization and DNA protection. The polypeptide is Nucleoid-associated protein SYO3AOP1_1366 (Sulfurihydrogenibium sp. (strain YO3AOP1)).